The primary structure comprises 754 residues: RNA-directed RNA polymerase catalytic subunit (754 aa).

2 consecutive short sequence motifs (nuclear localization signal) follow at residues Val-189–Arg-197 and Lys-205–Glu-218. A promoter-binding site region spans residues Arg-251–Glu-258. Residues Val-288 to Tyr-484 form the RdRp catalytic domain.

This sequence belongs to the influenza viruses polymerase PB1 family. In terms of assembly, influenza RNA polymerase is composed of three subunits: PB1, PB2 and PA. Interacts (via N-terminus) with PA (via C-terminus). Interacts (via C-terminus) with PB2 (via N-terminus); this interaction is essential for transcription initiation. In terms of processing, phosphorylated by host PRKCA.

It is found in the host nucleus. The protein resides in the host cytoplasm. The enzyme catalyses RNA(n) + a ribonucleoside 5'-triphosphate = RNA(n+1) + diphosphate. In terms of biological role, RNA-dependent RNA polymerase which is responsible for replication and transcription of virus RNA segments. The transcription of viral mRNAs occurs by a unique mechanism called cap-snatching. 5' methylated caps of cellular mRNAs are cleaved after 10-13 nucleotides by PA. In turn, these short capped RNAs are used as primers by PB1 for transcription of viral mRNAs. During virus replication, PB1 initiates RNA synthesis and copy vRNA into complementary RNA (cRNA) which in turn serves as a template for the production of more vRNAs. The polypeptide is RNA-directed RNA polymerase catalytic subunit (Influenza C virus (strain C/Johannesburg/1/1966)).